Reading from the N-terminus, the 315-residue chain is Rab effector Noc2 (315 aa).

One can recognise a RabBD domain in the interval 41-158 (QRRKQHLSPA…KRSGAWFYKG (118 aa)). The FYVE-type zinc-finger motif lies at 89–146 (GNGLSQCLLCGEVLGFLGSSSVFCKDCRKKVCTKCGIEASPGQKRPLWLCKICSEQRE). Residues cysteine 95, cysteine 98, cysteine 112, cysteine 115, cysteine 120, cysteine 123, cysteine 138, and cysteine 141 each contribute to the Zn(2+) site. A disordered region spans residues 170–315 (GRADDPHFRP…APAGPSSCLG (146 aa)). Basic and acidic residues-rich tracts occupy residues 184–193 (PAEREPRSSE) and 221–240 (LEDR…KPWK). Positions 262 to 275 (GCQSSLASGETGTG) are enriched in polar residues. Positions 298–315 (GRAPAADAAPAGPSSCLG) are enriched in low complexity.

Recruited to dense-core vesicles through specific interaction with RAB27A in endocrine cells. Interacts with RAB3A, RAB3B, RAB3C and RAB3D. Interacts with ZYX. Moderate to high levels of expression in thyroid, ovary, stomach, heart, pancreas, skeletal muscle, kidney and liver. Also detected in epithelial cells.

It localises to the cytoplasm. The protein resides in the cytoplasmic vesicle. It is found in the secretory vesicle membrane. Functionally, rab GTPase effector involved in the late steps of regulated exocytosis, both in endocrine and exocrine cells. Acts as a potential RAB3B effector protein in epithelial cells. The sequence is that of Rab effector Noc2 (RPH3AL) from Homo sapiens (Human).